Consider the following 542-residue polypeptide: Nuclear hormone receptor family member nhr-35 (542 aa).

Residues 74–149 constitute a DNA-binding region (nuclear receptor); it reads NSICHICSDV…SGMRDDQVQS (76 aa). 2 NR C4-type zinc fingers span residues 77 to 97 and 113 to 137; these read CHIC…CNGC and CRFE…FMKC. Residues 186–438 enclose the NR LBD domain; that stretch reads EYDQLLESLL…VLMEELILAE (253 aa). The segment at 445 to 487 is disordered; the sequence is RQDQTPCSIMNDTPSGSQDMCSPCPEDLLRTSTSSNSPTNSSL. Polar residues predominate over residues 448-464; that stretch reads QTPCSIMNDTPSGSQDM. The segment covering 475–487 has biased composition (low complexity); that stretch reads TSTSSNSPTNSSL.

Belongs to the nuclear hormone receptor family.

The protein localises to the nucleus. Its function is as follows. Orphan nuclear receptor. In Caenorhabditis elegans, this protein is Nuclear hormone receptor family member nhr-35 (nhr-35).